Reading from the N-terminus, the 207-residue chain is A-type ATP synthase subunit E (207 aa).

The protein belongs to the V-ATPase E subunit family. As to quaternary structure, has multiple subunits with at least A(3), B(3), C, D, E, F, H, I and proteolipid K(x).

The protein resides in the cell membrane. In terms of biological role, component of the A-type ATP synthase that produces ATP from ADP in the presence of a proton gradient across the membrane. This chain is A-type ATP synthase subunit E, found in Hyperthermus butylicus (strain DSM 5456 / JCM 9403 / PLM1-5).